The primary structure comprises 242 residues: Succinyl-CoA:3-ketoacid coenzyme A transferase subunit A (242 aa).

Gly-33–Gly-39 serves as a coordination point for CoA.

This sequence belongs to the 3-oxoacid CoA-transferase subunit A family. In terms of assembly, heterodimer of a subunit A and a subunit B.

It catalyses the reaction a 3-oxo acid + succinyl-CoA = a 3-oxoacyl-CoA + succinate. It participates in bacterial outer membrane biogenesis; lipopolysaccharide biosynthesis. This chain is Succinyl-CoA:3-ketoacid coenzyme A transferase subunit A (lpsI), found in Xanthomonas campestris pv. campestris (strain B100).